The sequence spans 375 residues: Anhydro-N-acetylmuramic acid kinase (375 aa).

Glycine 14–aspartate 21 is a binding site for ATP.

Belongs to the anhydro-N-acetylmuramic acid kinase family.

It catalyses the reaction 1,6-anhydro-N-acetyl-beta-muramate + ATP + H2O = N-acetyl-D-muramate 6-phosphate + ADP + H(+). Its pathway is amino-sugar metabolism; 1,6-anhydro-N-acetylmuramate degradation. The protein operates within cell wall biogenesis; peptidoglycan recycling. Its function is as follows. Catalyzes the specific phosphorylation of 1,6-anhydro-N-acetylmuramic acid (anhMurNAc) with the simultaneous cleavage of the 1,6-anhydro ring, generating MurNAc-6-P. Is required for the utilization of anhMurNAc either imported from the medium or derived from its own cell wall murein, and thus plays a role in cell wall recycling. The chain is Anhydro-N-acetylmuramic acid kinase from Cupriavidus pinatubonensis (strain JMP 134 / LMG 1197) (Cupriavidus necator (strain JMP 134)).